We begin with the raw amino-acid sequence, 447 residues long: GTPase Der (447 aa).

EngA-type G domains follow at residues 4 to 165 (QIIT…PEEE) and 180 to 357 (LQIV…KIWN). GTP is bound by residues 10–17 (GRPNVGKS), 57–61 (DTPGL), 119–122 (NKCE), 186–193 (GRPNAGKS), 233–237 (DTAGL), and 298–301 (NKWD). Positions 358–443 (KKITTSKLNE…PIRFIYVKTK (86 aa)) constitute a KH-like domain.

It belongs to the TRAFAC class TrmE-Era-EngA-EngB-Septin-like GTPase superfamily. EngA (Der) GTPase family. Associates with the 50S ribosomal subunit.

Functionally, GTPase that plays an essential role in the late steps of ribosome biogenesis. This Rickettsia conorii (strain ATCC VR-613 / Malish 7) protein is GTPase Der.